The following is a 227-amino-acid chain: MRFRQQVETCLNYWPAEGPVQRELILGTVGAYRRPIDSRPVLIQDVRGQEGTFTLDIHGFQFIKHISQHVASFDEASVLKDNMTALEAEHLLKTRWAIVNIWRPLKPVPRDPLAVSDARSFHDKDLLEIYGRVPGRQAKKDYDAATKGSGFGMLYGKYSPGQQWFYMSDMKPDEALLIKCYDSKDDGRTARRTPHTAFVDPRTRDVKVARESLELRCLVFFEDQPLA.

This sequence belongs to the asaB hydroxylase/desaturase family.

The protein operates within secondary metabolite biosynthesis. Functionally, hydroxylase/desaturase; part of the gene cluster that mediates the biosynthesis of aspergillic acid, a hydroxamic acid-containing pyrazinone with aliphatic side chains that originates from leucine (Leu) and isoleucine (Ile). Aspergillic acid has antibiotic properties and was shown to be lethal to mice. The first step in the pathway is the production of deoxyaspergillic acid via a condensation between the Ile amine and the Leu carboxylic acid, followed by a reductive release from the protein forming the dipeptide aldehyde NH(2)-Leu-Ile-CHO, which could undergo an intermolecular cyclization resulting in a dihydropyrazinone. As the NRPS asaC lacks a condensation domain, it is improbable that it is responsible for condensation of Leu and Ile. One possibility is that asaC acts on a previously condensed dipeptide and functions as a Leu-Ile reductase to yield deoxyaspergillic acid. After asaC forms deoxyaspergillic acid, the cytochrome P450 asaD oxidizes the pyrazinone to the hydroxamic acid-containing bioactive metabolite aspergillic acid. The hydroxylase/desaturase asaB can then convert aspergillic acid to hydroxyaspergillic acid. Both aspergillic acid and hydroxyaspergillic acid can form complexes with iron producing ferriaspergillin analogs. This chain is Hydroxylase/desaturase asaB, found in Aspergillus flavus (strain ATCC 200026 / FGSC A1120 / IAM 13836 / NRRL 3357 / JCM 12722 / SRRC 167).